A 741-amino-acid polypeptide reads, in one-letter code: Aspartyl/asparaginyl beta-hydroxylase (741 aa).

The tract at residues 1-54 (MAPRKNAKGGGGNSSSSGSGSGSGSGSPSTGSSGSSSSPGARREAKHGGHKNGR) is disordered. At 1 to 62 (MAPRKNAKGG…GRRGGISGGS (62 aa)) the chain is on the cytoplasmic side. Over residues 8-25 (KGGGGNSSSSGSGSGSGS) the composition is skewed to gly residues. The residue at position 15 (Ser15) is a Phosphoserine. Residues 26–40 (GSPSTGSSGSSSSPG) show a composition bias toward low complexity. Residues 63–83 (FFTWFMVIALLGVWTSVAVVW) form a helical; Signal-anchor for type II membrane protein membrane-spanning segment. Over 84 to 741 (FDLVDYEEVL…PQQRRSLPAI (658 aa)) the chain is Lumenal. Residues Asp100, Asp102, Asp104, Asp106, and Asp111 each coordinate Ca(2+). Disordered stretches follow at residues 120–141 (ERSP…AELE) and 222–244 (TASQ…SDPS). Positions 231–242 (MEEMTNEQENSD) are enriched in acidic residues. 5 TPR repeats span residues 324–357 (IKAE…YPQS), 365–398 (AQCE…PDAP), 437–470 (TTLK…TPND), 472–504 (FAKV…GDPG), and 508–540 (GRFY…GHFA). An N-linked (GlcNAc...) asparagine glycan is attached at Asn453. Position 608 (Trp608) interacts with 2-oxoglutarate. Cys624 and Cys631 are disulfide-bonded. Ser651 is a binding site for 2-oxoglutarate. Position 662 (His662) interacts with Fe cation. 671-673 (RMH) lines the 2-oxoglutarate pocket. Asn689 is a glycosylation site (N-linked (GlcNAc...) asparagine). His708 serves as a coordination point for Fe cation. Position 718 (Arg718) interacts with 2-oxoglutarate.

Belongs to the aspartyl/asparaginyl beta-hydroxylase family. In terms of assembly, monomer. Isoform 2 interacts with CASQ2. It depends on Fe cation as a cofactor. As to expression, isoform 1 is detected in heart, liver and ovary (at protein level). Detected in heart ventricle. Isoform 1 is widely expressed. Isoform 2 is detected in heart and skeletal muscle.

It is found in the endoplasmic reticulum membrane. Its subcellular location is the sarcoplasmic reticulum membrane. It catalyses the reaction L-aspartyl-[protein] + 2-oxoglutarate + O2 = 3-hydroxy-L-aspartyl-[protein] + succinate + CO2. Its function is as follows. Specifically hydroxylates an Asp or Asn residue in certain epidermal growth factor-like (EGF) domains of a number of proteins. The polypeptide is Aspartyl/asparaginyl beta-hydroxylase (Asph) (Mus musculus (Mouse)).